A 466-amino-acid chain; its full sequence is Putative multidrug resistance protein MdtD (466 aa).

The next 14 membrane-spanning stretches (helical) occupy residues 11–31 (LWIV…VNTA), 48–68 (SVIV…GWLA), 71–91 (IGVK…SLLC), 105–125 (VIQG…VMKI), 137–157 (FVTL…GFLV), 164–184 (WIFL…WFLM), 194–214 (FDIS…LALD), 218–238 (SLGI…IALL), 262–282 (FSIG…LPFM), 286–306 (FLQL…VPMV), 328–347 (VLIV…ALVA), 351–370 (WIWM…AIRF), 403–423 (LGVS…MAAG), and 429–449 (MVFI…ALIF).

The protein belongs to the major facilitator superfamily. TCR/Tet family.

It localises to the cell inner membrane. The protein is Putative multidrug resistance protein MdtD of Pectobacterium carotovorum subsp. carotovorum (strain PC1).